We begin with the raw amino-acid sequence, 341 residues long: Tryptophan--tRNA ligase (341 aa).

ATP-binding positions include 11–13 and 19–20; these read RPT and GH. Positions 12–20 match the 'HIGH' region motif; it reads PTGKLHIGH. D140 contacts L-tryptophan. ATP is bound by residues 152–154, L193, and 201–205; these read GED and KMSKS. A 'KMSKS' region motif is present at residues 201-205; that stretch reads KMSKS.

Belongs to the class-I aminoacyl-tRNA synthetase family. In terms of assembly, homodimer.

It is found in the cytoplasm. The catalysed reaction is tRNA(Trp) + L-tryptophan + ATP = L-tryptophyl-tRNA(Trp) + AMP + diphosphate + H(+). Functionally, catalyzes the attachment of tryptophan to tRNA(Trp). The protein is Tryptophan--tRNA ligase of Clostridium longisporum.